A 376-amino-acid polypeptide reads, in one-letter code: Small RNA 2'-O-methyltransferase (376 aa).

Positions 49, 67, and 103 each coordinate S-adenosyl-L-methionine. Glu121, Glu124, His125, and His171 together coordinate Mg(2+).

It belongs to the methyltransferase superfamily. HEN1 family. It depends on Mg(2+) as a cofactor.

The protein localises to the cytoplasm. The catalysed reaction is small RNA 3'-end nucleotide + S-adenosyl-L-methionine = small RNA 3'-end 2'-O-methylnucleotide + S-adenosyl-L-homocysteine + H(+). Functionally, methyltransferase that adds a 2'-O-methyl group at the 3'-end of piRNAs, a class of 24 to 30 nucleotide RNAs that are generated by a Dicer-independent mechanism and are primarily derived from transposons and other repeated sequence elements. This probably protects the 3'-end of piRNAs from uridylation activity and subsequent degradation. Stabilization of piRNAs is essential for gametogenesis. The protein is Small RNA 2'-O-methyltransferase (HENMT1) of Gallus gallus (Chicken).